The sequence spans 206 residues: MARYTGATCKLCRREGMKLFLKGDRCYTDKCAFVRRSYAPGQHGASRKKLSNYGTQLREKQKAKRIYGVLEGQFRNTYERAEKMRGIAGENLLKLLEMRLDNVVYRLGYGASRTEARQLVNHGHFLVNGKKVDIASFKVSVNDVITVCEKSRGSERFKMFAENPKALPKWLEANVENFEGKVIAEPAREDIDVPVNETLIVELYSK.

The region spanning 98 to 163 is the S4 RNA-binding domain; that stretch reads MRLDNVVYRL…SERFKMFAEN (66 aa).

Belongs to the universal ribosomal protein uS4 family. Part of the 30S ribosomal subunit. Contacts protein S5. The interaction surface between S4 and S5 is involved in control of translational fidelity.

In terms of biological role, one of the primary rRNA binding proteins, it binds directly to 16S rRNA where it nucleates assembly of the body of the 30S subunit. Functionally, with S5 and S12 plays an important role in translational accuracy. This is Small ribosomal subunit protein uS4A from Clostridium perfringens (strain SM101 / Type A).